Consider the following 321-residue polypeptide: Cytochrome c biogenesis protein CcsA (321 aa).

The next 8 membrane-spanning stretches (helical) occupy residues 17–37 (IVSI…IVGL), 43–63 (KGMI…WIYS), 71–91 (LYES…VPKI), 98–118 (LSAI…SGLL), 143–163 (MVLS…LLVI), 225–245 (VISL…VWAN), 258–275 (ETWA…LHTR), and 286–306 (AIVA…VNLL).

The protein belongs to the CcmF/CycK/Ccl1/NrfE/CcsA family. May interact with Ccs1.

It localises to the plastid. The protein resides in the chloroplast thylakoid membrane. Required during biogenesis of c-type cytochromes (cytochrome c6 and cytochrome f) at the step of heme attachment. The sequence is that of Cytochrome c biogenesis protein CcsA from Platanus occidentalis (Sycamore).